The following is a 474-amino-acid chain: PTS system N-acetylmuramic acid-specific EIIBC component (474 aa).

Positions 1 to 89 (MAKEISSELL…SELLGDAPVQ (89 aa)) constitute a PTS EIIB type-1 domain. At 1–123 (MAKEISSELL…LAKFATIFTP (123 aa)) the chain is on the cytoplasmic side. C29 (phosphocysteine intermediate; for EIIB activity) is an active-site residue. One can recognise a PTS EIIC type-1 domain in the interval 115-474 (AKFATIFTPL…LFGCRNVNLD (360 aa)). The chain crosses the membrane as a helical span at residues 124–144 (LIPGFIAAGLLLGIATLIATV). Topologically, residues 145-157 (MHVPADAQGTLPD) are periplasmic. The chain crosses the membrane as a helical span at residues 158 to 178 (ALNFMKVFSKGLFTFLVILVG). At 179 to 180 (YN) the chain is on the cytoplasmic side. A helical transmembrane segment spans residues 181 to 201 (AAQAFGGTGVNGAIIAALFLL). The Periplasmic segment spans residues 202 to 217 (GYNPAATTGYYAGFHD). The chain crosses the membrane as a helical span at residues 218–238 (FFGLPIDPRGNIIGVLIAAWA). The Cytoplasmic segment spans residues 239–260 (CARIEGMVRRFMPDDLDMLLTS). A helical transmembrane segment spans residues 261–281 (LITLLITATLAYLIIMPLGGW). The Periplasmic portion of the chain corresponds to 282–301 (LFEGMSWLFMHLNSNPFGCA). A helical transmembrane segment spans residues 302–322 (VLAGLFLIAVVFGVHQGFIPV). Over 323-334 (YLALMDSQGFNS) the chain is Cytoplasmic. A helical transmembrane segment spans residues 335-355 (LFPILSMAGAGQVGAALALYW). At 356 to 368 (RAQPHSALRSQVR) the chain is on the periplasmic side. Residues 369 to 389 (GAIIPGLLGVGEPLIYGVTLP) traverse the membrane as a helical segment. The Cytoplasmic portion of the chain corresponds to 390-393 (RMKP). A helical membrane pass occupies residues 394-414 (FVTACLGGAAGGLFIGLIAWW). Residues 415-440 (GLPMGLNSAFGPSGLVALPLMTSAQG) are Periplasmic-facing. A helical transmembrane segment spans residues 441 to 461 (ILPAMAVYAGGILVAWVCGFI). Topologically, residues 462–474 (FTTLFGCRNVNLD) are cytoplasmic.

The protein resides in the cell inner membrane. The catalysed reaction is N-acetyl-beta-D-muramate(out) + N(pros)-phospho-L-histidyl-[protein] = N-acetyl-beta-D-muramate 6-phosphate(in) + L-histidyl-[protein]. Functionally, the phosphoenolpyruvate-dependent sugar phosphotransferase system (sugar PTS), a major carbohydrate active transport system, catalyzes the phosphorylation of incoming sugar substrates concomitantly with their translocation across the cell membrane. This system is involved in N-acetylmuramic acid (MurNAc) transport, yielding cytoplasmic MurNAc-6-P. Is also able to take up anhydro-N-acetylmuramic acid (anhMurNAc), but cannot phosphorylate the carbon 6, probably because of the 1,6-anhydro ring. The protein is PTS system N-acetylmuramic acid-specific EIIBC component (murP) of Shigella flexneri.